The primary structure comprises 4095 residues: Protein adenylyltransferase and cysteine protease IbpA (4095 aa).

An N-terminal signal peptide occupies residues 1–97 (MNKNCYKLIF…MVAAPNFAQS (97 aa)). 2 binds bovine IgG2 Fc regions span residues 972–1515 (SERI…FVKA) and 1116–1255 (SEVQ…FLKE). Disordered regions lie at residues 1082–1117 (EVSDDWERDPDEPDEPDYKTESRLETRDRFDTLPSE), 1130–1154 (KEKAQQKRQAEALQAKTKNEQLQSD), 1204–1223 (QEALAKQKQEQQKQADAKAK), 1625–1652 (TVSHERDSQNGEKTNIGGASSNTGTGFT), and 1705–1732 (EEDEAKAEQQAKAKAAPDATDNAAQKEE). Residues 1087-1096 (WERDPDEPDE) are compositionally biased toward acidic residues. Basic and acidic residues-rich tracts occupy residues 1097 to 1117 (PDYKTESRLETRDRFDTLPSE) and 1130 to 1139 (KEKAQQKRQA). A coiled-coil region spans residues 1116–1247 (SEVQDKLRQK…AKDHQIEEAL (132 aa)). Over residues 1716–1727 (KAKAAPDATDNA) the composition is skewed to low complexity. Tandem repeats lie at residues 2250–2271 (YSTLGDQNANKGRKLPNGSDDI), 2272–2295 (YSLLGKVKVSGDEPVYDKVSAEGA), 2296–2317 (YDLLGDSNANKGRTLRNNSDDL), 2318–2343 (YSTVGDANSDISRIRSNVYDEIAAGP), 2344–2365 (YSLLGRTKAAEEHIYEQIGEGP), 2366–2387 (YSLLGNGSAVRNRTLGGESNST), 2388–2413 (YSTVGDANSDISRIRSNVYDEIVAGP), 2414–2435 (YSLLGKPKAAEEHIYEQIGEGP), 2436–2457 (YSLLGNGSAVRNRTLGGESDSP), 2458–2483 (YSTVGDANSDISRIRSNVYDEIVAGP), 2484–2505 (YSLLGRTKAAEEHIYEQIGEGP), and 2506–2527 (YSLLGNGSAVRNRTLGGESDSP). Residues 2250 to 2527 (YSTLGDQNAN…RTLGGESDSP (278 aa)) are 12 X 22 AA approximate repeats. Polar residues-rich tracts occupy residues 2592–2611 (SDTEAGNGTYSEITSRTRNA) and 2794–2803 (TAPQKTSPVK). 6 disordered regions span residues 2592 to 2617 (SDTEAGNGTYSEITSRTRNANDPLPP), 2765 to 2809 (TIGE…SAEG), 2825 to 2894 (AKGQ…SPKR), 2914 to 2933 (LKSKEDQANPAKAEVSEPIY), 2943 to 3033 (LARA…KSED), and 3049 to 3069 (NKSQAKEAKSEQETVSKPNYD). Low complexity predominate over residues 2880-2889 (PFPSEFSSEP). Polar residues-rich tracts occupy residues 2977-2996 (SNLSDSISNETIAENGQSVA) and 3005-3018 (AESNRNNNGNQKLQ). The span at 3052–3062 (QAKEAKSEQET) shows a compositional bias: basic and acidic residues. The Fido 1 domain maps to 3218-3355 (LTVEMIEKLN…AEVVKEFLTE (138 aa)). The yopT-like stretch occupies residues 3222 to 4095 (MIEKLNHGLR…FNVVNYKKNN (874 aa)). The tract at residues 3354–3698 (TELGKKSSPQ…VDFINRAKNE (345 aa)) is binds bovine IgG2 Fc. Disordered regions lie at residues 3357–3415 (GKKS…PSVP) and 3432–3454 (AELKDAAGGNKKAAEKSEGATGV). Composition is skewed to polar residues over residues 3360–3379 (SSPQEGGANNQNGQATSPVT) and 3388–3401 (VENTQSADSLTIKQ). The segment covering 3443–3454 (KAAEKSEGATGV) has biased composition (basic and acidic residues). The tract at residues 3535–3557 (IPEATVKQMSHLPEFDDILTEGA) is arm region. The Fido 2 domain maps to 3640 to 3777 (LTVQMIENLN…SEVVVEFLKE (138 aa)). Residues 3670 to 3671 (KE), 3722 to 3724 (GNG), Arg3728, and Gln3757 each bind ATP. A compositionally biased stretch (basic and acidic residues) spans 3783 to 3798 (SKEDNEQNLEKTDRTS). The tract at residues 3783-3829 (SKEDNEQNLEKTDRTSTDLTESAVENSAALSSGTVRSATVSETVTET) is disordered. Over residues 3799–3815 (TDLTESAVENSAALSSG) the composition is skewed to polar residues. Residues 3816 to 3829 (TVRSATVSETVTET) are compositionally biased toward low complexity. Catalysis depends on for cysteine protease activity residues Cys3910, His4033, and Asp4048.

The protein in the central section; belongs to the fic family. In the C-terminal section; belongs to the peptidase C58 family. In terms of assembly, immunoglobulin-binding protein. The long form of the protein is probably processed, and/or the transcript may be subject to differential translational initiation.

It localises to the secreted. The protein resides in the cell outer membrane. It carries out the reaction L-tyrosyl-[protein] + ATP = O-(5'-adenylyl)-L-tyrosyl-[protein] + diphosphate. The enzyme catalyses L-threonyl-[protein] + ATP = 3-O-(5'-adenylyl)-L-threonyl-[protein] + diphosphate. Functionally, adenylyltransferase involved in virulence by mediating the addition of adenosine 5'-monophosphate (AMP) to specific tyrosine residue of host Rho GTPases RhoA, Rac and Cdc42. The resulting AMPylation inactivates Rho GTPases, thereby inhibiting actin assembly in infected cells. Probably also acts as a cysteine protease, which may play a central role after invasion of host cell and in virulence. Possible member (with IbpB) of a 2 partner secretion. Probably able to bind bovine epithelial cells (host cells). May participate in the formation of fibrils at the surface of the bacteria. This is Protein adenylyltransferase and cysteine protease IbpA (ibpA) from Histophilus somni (strain 2336) (Haemophilus somnus).